The following is an 80-amino-acid chain: Toxin Acra1 (80 aa).

The signal sequence occupies residues 1 to 22; the sequence is MMKLVLFSIIVILFSLIGSIHG. Residues 25-80 form the LCN-type CS-alpha/beta domain; it reads VPGNYPLDSSGNKYPCTVLGDNQSCIDVCKKHGVKYGYCYSFKCWCEFLEDKNVSI. Intrachain disulfides connect Cys-40-Cys-63, Cys-49-Cys-68, and Cys-53-Cys-70.

Expressed by the venom gland.

It is found in the secreted. Functionally, probable neurotoxin that inhibits ion channels. Is toxic to mice. Is about 2.8% of the total protein in the venom. This is Toxin Acra1 from Androctonus crassicauda (Arabian fat-tailed scorpion).